A 477-amino-acid chain; its full sequence is Probable malate:quinone oxidoreductase (477 aa).

This sequence belongs to the MQO family. FAD is required as a cofactor.

The enzyme catalyses (S)-malate + a quinone = a quinol + oxaloacetate. It participates in carbohydrate metabolism; tricarboxylic acid cycle; oxaloacetate from (S)-malate (quinone route): step 1/1. The chain is Probable malate:quinone oxidoreductase from Synechococcus sp. (strain RCC307).